The primary structure comprises 1367 residues: Histone acetyltransferase HAC2 (1367 aa).

The interval 110 to 151 is disordered; that stretch reads TSSIPGSSGSASETNSGSDITKQDFKNDSPSDSKKVQGSSTS. Low complexity predominate over residues 111–127; the sequence is SSIPGSSGSASETNSGS. The span at 130 to 144 shows a compositional bias: basic and acidic residues; it reads TKQDFKNDSPSDSKK. 12 repeat units span residues 188–200, 223–235, 251–263, 286–298, 314–326, 349–361, 377–389, 418–430, 432–444, 459–471, 473–485, and 500–512. Residues 188-512 are 12 X 13 AA approximate repeats; that stretch reads KLGTVVDIVE…IGVDIVEPMK (325 aa). The segment at 688–765 adopts a PHD-type zinc-finger fold; the sequence is HQICSPCHSR…EYICPTCLLE (78 aa). In terms of domain architecture, CBP/p300-type HAT spans 780–1213; the sequence is DSGAKDLPET…ILHHLHTSNK (434 aa). Acetyl-CoA-binding positions include 903 to 905, 922 to 923, and W978; these read LDS and RT. The segment at 1094–1157 adopts a ZZ-type 1; degenerate zinc-finger fold; the sequence is ELNYSCTRCS…QLSKVQVNGV (64 aa). Residues C1099, C1102, C1123, C1126, C1225, C1228, C1240, C1243, C1249, C1252, H1261, and H1263 each coordinate Zn(2+). Residues 1220–1273 form a ZZ-type 2 zinc finger; it reads SSSLTCTACKKDVSTTIYFPCLLCPDYRACTGCYTKNRTLRHLHIFPTLPSANR. A TAZ-type zinc finger spans residues 1274 to 1359; it reads APSRTVMVLE…NCPVPQCRDR (86 aa).

Rosette leaves, stems and flowers.

The protein localises to the nucleus. The catalysed reaction is L-lysyl-[protein] + acetyl-CoA = N(6)-acetyl-L-lysyl-[protein] + CoA + H(+). Acetyltransferase enzyme. Acetylates histones, giving a specific tag for transcriptional activation. No acetyltransferase activity found in vitro. This chain is Histone acetyltransferase HAC2 (HAC2), found in Arabidopsis thaliana (Mouse-ear cress).